The sequence spans 313 residues: tRNA dimethylallyltransferase (313 aa).

An ATP-binding site is contributed by 14-21 (GPTASGKT). Substrate is bound at residue 16 to 21 (TASGKT). Interaction with substrate tRNA regions lie at residues 39-42 (DSAL) and 163-167 (QRIGR).

This sequence belongs to the IPP transferase family. Monomer. Mg(2+) is required as a cofactor.

The enzyme catalyses adenosine(37) in tRNA + dimethylallyl diphosphate = N(6)-dimethylallyladenosine(37) in tRNA + diphosphate. Catalyzes the transfer of a dimethylallyl group onto the adenine at position 37 in tRNAs that read codons beginning with uridine, leading to the formation of N6-(dimethylallyl)adenosine (i(6)A). This Thiobacillus denitrificans (strain ATCC 25259 / T1) protein is tRNA dimethylallyltransferase.